The chain runs to 350 residues: MDINLFDFHLPEELIAQVPLEERETSRLMVLDRETGDIEHKHFTDILSYLHEGDCLVLNETKVMPARLHGVKEDTGAHIEVLLLKQEEGDKWETLVKPAKRVKEGTVISFGEGKLKATCTGTADQGGRQLEFSYDGIFYEILDELGEMPLPPYIKETLEDRDRYQTVYAKEIGSAAAPTAGLHFTEELLEKLKQKGVELAFITLHVGLGTFRPVSADTIEEHHMHAEYYHMSEETAALLNRVKENGGRIITVGTTSTRTLETIATDHDGKLCAASGWTDIFMYPGYEFKAIDGLITNFHLPKSTLIMLVSAFANRDNVLHAYNEAVKEKYRFFSFGDAMFVASHAKMGNK.

The protein belongs to the QueA family. In terms of assembly, monomer.

The protein localises to the cytoplasm. It catalyses the reaction 7-aminomethyl-7-carbaguanosine(34) in tRNA + S-adenosyl-L-methionine = epoxyqueuosine(34) in tRNA + adenine + L-methionine + 2 H(+). The protein operates within tRNA modification; tRNA-queuosine biosynthesis. Transfers and isomerizes the ribose moiety from AdoMet to the 7-aminomethyl group of 7-deazaguanine (preQ1-tRNA) to give epoxyqueuosine (oQ-tRNA). In Bacillus thuringiensis subsp. konkukian (strain 97-27), this protein is S-adenosylmethionine:tRNA ribosyltransferase-isomerase.